The primary structure comprises 176 residues: Methylated-DNA--protein-cysteine methyltransferase (176 aa).

The active-site Nucleophile; methyl group acceptor is Cys-142.

The protein belongs to the MGMT family.

The protein localises to the cytoplasm. The enzyme catalyses a 6-O-methyl-2'-deoxyguanosine in DNA + L-cysteinyl-[protein] = S-methyl-L-cysteinyl-[protein] + a 2'-deoxyguanosine in DNA. It catalyses the reaction a 4-O-methyl-thymidine in DNA + L-cysteinyl-[protein] = a thymidine in DNA + S-methyl-L-cysteinyl-[protein]. Its function is as follows. Involved in the cellular defense against the biological effects of O6-methylguanine (O6-MeG) and O4-methylthymine (O4-MeT) in DNA. Repairs the methylated nucleobase in DNA by stoichiometrically transferring the methyl group to a cysteine residue in the enzyme. This is a suicide reaction: the enzyme is irreversibly inactivated. The chain is Methylated-DNA--protein-cysteine methyltransferase from Methanothermobacter thermautotrophicus (strain ATCC 29096 / DSM 1053 / JCM 10044 / NBRC 100330 / Delta H) (Methanobacterium thermoautotrophicum).